The following is a 272-amino-acid chain: MAAASSVSSPPLCLAGRVAIVTGSSRGIGRAIAIHLAELGARVVVNYSTSPVEAEKVATAITTNCSKDAEVAGKSPRVIVVKADISEPSQVKSLFDEAERVFESPVHILVNSAAIADPNHSTISDMSVELFDRIISVNTRGAFICAREAANRLKRGGGGRIILLSTSLVQTLNTNYGSYTASKAAVEAMAKILAKELKGTEITVNCVSPGPVATEMFYTGLSNEIVEKVKSQNLFGRIGETKDIAPVVGFLASDAGEWINGQVIMANGGCLL.

The transit peptide at 1–53 directs the protein to the chloroplast; the sequence is MAAASSVSSPPLCLAGRVAIVTGSSRGIGRAIAIHLAELGARVVVNYSTSPVE. Position 26–50 (26–50) interacts with NADP(+); it reads RGIGRAIAIHLAELGARVVVNYSTS. A substrate-binding site is contributed by S165. Y179 functions as the Proton acceptor in the catalytic mechanism.

Belongs to the short-chain dehydrogenases/reductases (SDR) family.

The protein resides in the plastid. It localises to the chloroplast. Functionally, aldehyde reductase that catalyzes the reduction of the aldehyde carbonyl groups on saturated and alpha,beta-unsaturated aldehydes with more than 5 carbons. No activity on alpha,beta-unsaturated ketones. Can use propionaldehyde, butyraldehyde, methylglyoxal, (e)-2-pentenal, (E)-2-hexenal, (Z)-3-hexenal and (E)-2-nonenal as substrates, but not propenal (acrolein), crotonaldehyde, 2-butanone, 3-buten-2-one or 1-penten-3-one. The sequence is that of NADPH-dependent aldehyde reductase 2, chloroplastic from Arabidopsis thaliana (Mouse-ear cress).